The sequence spans 218 residues: 3-dehydroquinate dehydratase (218 aa).

Residues 29–31 (EFR) and Arg-56 contribute to the 3-dehydroquinate site. His-116 functions as the Proton donor/acceptor in the catalytic mechanism. The active-site Schiff-base intermediate with substrate is Lys-142. The 3-dehydroquinate site is built by Arg-180, Ser-200, and Gln-204.

This sequence belongs to the type-I 3-dehydroquinase family. Homodimer.

It carries out the reaction 3-dehydroquinate = 3-dehydroshikimate + H2O. The protein operates within metabolic intermediate biosynthesis; chorismate biosynthesis; chorismate from D-erythrose 4-phosphate and phosphoenolpyruvate: step 3/7. In terms of biological role, involved in the third step of the chorismate pathway, which leads to the biosynthesis of aromatic amino acids. Catalyzes the cis-dehydration of 3-dehydroquinate (DHQ) and introduces the first double bond of the aromatic ring to yield 3-dehydroshikimate. This chain is 3-dehydroquinate dehydratase, found in Methanococcus maripaludis (strain DSM 14266 / JCM 13030 / NBRC 101832 / S2 / LL).